We begin with the raw amino-acid sequence, 395 residues long: S-adenosylmethionine synthase (395 aa).

A Mg(2+)-binding site is contributed by Glu-10. Residue His-16 coordinates ATP. Residue Glu-44 participates in K(+) binding. Glu-57 and Gln-100 together coordinate L-methionine. Residues 168–170 (DGK), 236–239 (SGRF), 253–254 (RK), Ala-270, Lys-274, and Lys-278 contribute to the ATP site. Lys-278 contributes to the L-methionine binding site.

The protein belongs to the AdoMet synthase family. As to quaternary structure, homotetramer. The cofactor is Mn(2+). Requires Mg(2+) as cofactor. Co(2+) serves as cofactor. K(+) is required as a cofactor.

It is found in the cytoplasm. It catalyses the reaction L-methionine + ATP + H2O = S-adenosyl-L-methionine + phosphate + diphosphate. Its pathway is amino-acid biosynthesis; S-adenosyl-L-methionine biosynthesis; S-adenosyl-L-methionine from L-methionine: step 1/1. In terms of biological role, catalyzes the formation of S-adenosylmethionine from methionine and ATP. The reaction comprises two steps that are both catalyzed by the same enzyme: formation of S-adenosylmethionine (AdoMet) and triphosphate, and subsequent hydrolysis of the triphosphate. The sequence is that of S-adenosylmethionine synthase (METK) from Populus deltoides (Eastern poplar).